The chain runs to 348 residues: NAC domain-containing protein 101 (348 aa).

The NAC domain occupies 7-156 (IPPGYRFHPT…GWVVCRAFKK (150 aa)). Residues 107–162 (VGMRKTLVFYKGRAPNGQKSDWIMHEYRLETDENGPPHEEGWVVCRAFKKKLTTMN) mediate DNA binding. A disordered region spans residues 325-348 (MVSMNASSSSSPCSFYSWAQNTHT). The span at 327-341 (SMNASSSSSPCSFYS) shows a compositional bias: low complexity.

This sequence belongs to the plant vascular related NAC-domain protein family. In terms of assembly, homodimer. In terms of tissue distribution, expressed in root inner metaxylem vessels and in hypocotyl vessels. Present in root developing xylems. Accumulates in the xylem but not in interfascicular fibers or pith cells in inflorescence stems. Absent from secondary xylem in roots.

It is found in the nucleus. Transcription activator that binds to the secondary wall NAC binding element (SNBE), 5'-(T/A)NN(C/T)(T/C/G)TNNNNNNNA(A/C)GN(A/C/T)(A/T)-3', and to the tracheary elements (TE) specific regulating cis-element (TERE), 5'-CTTNAAAGCNA-3', in the promoter of target genes (e.g. genes involved in secondary wall biosynthesis, cell wall modification such as xylan accumulation, and programmed cell death). Involved in xylem formation in roots and shoots, especially regulating metaxylem vessel differentiation by promoting immature xylem vessel-specific genes expression, especially genes regulating programmed cell death (PCD) and secondary wall formation in tracheary elements (TE). Can activate MYB25, MYB46, MYB58, MYB63, MYB83, MYB103, CESA4, LBD15, LBD30, ERF115, XCP1, XCP2, NAC010/SND3, KNAT7, ASL19 and ASL20 expression. The polypeptide is NAC domain-containing protein 101 (Arabidopsis thaliana (Mouse-ear cress)).